A 220-amino-acid chain; its full sequence is Redox-sensing transcriptional repressor Rex (220 aa).

A DNA-binding region (H-T-H motif) is located at residues 16–55; the sequence is MYVQVLETLKREGSQVVSSELLARTCSVNPSQIRKDLAYF. 90–95 is a binding site for NAD(+); that stretch reads GIGNLG.

The protein belongs to the transcriptional regulatory Rex family. In terms of assembly, homodimer.

Its subcellular location is the cytoplasm. Functionally, modulates transcription in response to changes in cellular NADH/NAD(+) redox state. This Solidesulfovibrio magneticus (strain ATCC 700980 / DSM 13731 / RS-1) (Desulfovibrio magneticus) protein is Redox-sensing transcriptional repressor Rex.